The chain runs to 582 residues: Probable DNA ligase (582 aa).

Glu-243 contributes to the ATP binding site. Catalysis depends on Lys-245, which acts as the N6-AMP-lysine intermediate. Positions 250, 265, 295, 335, 410, and 416 each coordinate ATP.

It belongs to the ATP-dependent DNA ligase family. Requires Mg(2+) as cofactor.

The enzyme catalyses ATP + (deoxyribonucleotide)n-3'-hydroxyl + 5'-phospho-(deoxyribonucleotide)m = (deoxyribonucleotide)n+m + AMP + diphosphate.. In terms of biological role, DNA ligase that seals nicks in double-stranded DNA during DNA replication, DNA recombination and DNA repair. This is Probable DNA ligase from Dictyoglomus thermophilum (strain ATCC 35947 / DSM 3960 / H-6-12).